Reading from the N-terminus, the 400-residue chain is Deoxyguanosinetriphosphate triphosphohydrolase-like protein (400 aa).

The 143-residue stretch at 73–215 folds into the HD domain; sequence RLTHSIEVSQ…AAIADDIAYN (143 aa).

Belongs to the dGTPase family. Type 2 subfamily.

This is Deoxyguanosinetriphosphate triphosphohydrolase-like protein from Bartonella quintana (strain Toulouse) (Rochalimaea quintana).